We begin with the raw amino-acid sequence, 417 residues long: Transmembrane protease serine 11G (417 aa).

Residues 1–22 lie on the Cytoplasmic side of the membrane; that stretch reads MYQPGILGRRKRVCKPWTVALT. Residues 23–43 form a helical; Signal-anchor for type II membrane protein membrane-spanning segment; the sequence is TTAALLALAVLIGLLVYFLVY. At 44-417 the chain is on the extracellular side; sequence EEKTHYYQAS…RNWIKSKTNI (374 aa). The 120-residue stretch at 46 to 165 folds into the SEA domain; that stretch reads KTHYYQASFW…PYLREMNAAQ (120 aa). Positions 186–416 constitute a Peptidase S1 domain; the sequence is IADGKPAGSN…YRNWIKSKTN (231 aa). Cysteines 211 and 227 form a disulfide. Active-site charge relay system residues include histidine 226 and aspartate 271. Cystine bridges form between cysteine 336–cysteine 352 and cysteine 363–cysteine 392. Residue serine 367 is the Charge relay system of the active site.

Belongs to the peptidase S1 family. As to expression, highest expression in lung and tongue. Also expressed in brain, colon, heart and liver. Isoform 1 is the predominant form in tongue whereas both isoforms are expressed in similar amounts in lung. At the cellular level, expression is confined to epithelial cells within the cleft of the circumvallate papillae extending into the ducts of the minor salivary glands, the respiratory epithelium of the nasal cavity and tear gland ducts.

The protein localises to the membrane. In Rattus norvegicus (Rat), this protein is Transmembrane protease serine 11G (Tmprss11g).